The primary structure comprises 618 residues: D-glucuronyl C5-epimerase (618 aa).

The Cytoplasmic portion of the chain corresponds to 1 to 11 (MRCLAARVNYK). Residues 12–29 (TLIIICALFTLVTVLLWN) form a helical; Signal-anchor for type II membrane protein membrane-spanning segment. Residues 30–618 (KCSSDKAIQF…YLKGSRAKHN (589 aa)) lie on the Lumenal side of the membrane. Residues Y180, 185-187 (RDR), Q202, Y210, Q213, and Q216 contribute to the substrate site. Ca(2+)-binding residues include T238, E240, T269, N270, and D393. Residues 430–433 (KLGE), 500–501 (EY), N511, Y515, Y561, R564, and 573–582 (NLARWDYHTT) contribute to the substrate site.

The protein belongs to the D-glucuronyl C5-epimerase family. In terms of assembly, homodimer. Interacts with HS2ST1. In terms of tissue distribution, widely expressed with highest levels in lung and lowest levels in spleen.

It is found in the golgi apparatus membrane. It catalyses the reaction [heparosan-N-sulfate](n) = [heparan-N-sulfate](n). It functions in the pathway glycan metabolism; heparan sulfate biosynthesis. Its pathway is glycan metabolism; heparin biosynthesis. Functionally, converts D-glucuronic acid residues adjacent to N-sulfate sugar residues to L-iduronic acid residues, both in maturing heparan sulfate (HS) and heparin chains. This is important for further modifications that determine the specificity of interactions between these glycosaminoglycans and proteins. The sequence is that of D-glucuronyl C5-epimerase (Glce) from Mus musculus (Mouse).